The sequence spans 1253 residues: Latent-transforming growth factor beta-binding protein 3 (1253 aa).

A signal peptide spans 1-38 (MPGPRGAAHGLAPAMRQAGALGLLALLLLALLGPGGGA). A glycan (N-linked (GlcNAc...) asparagine) is linked at Asn86. In terms of domain architecture, EGF-like 1 spans 106–138 (RVVVCPLPCMNGGQCSSRNQCLCPPDFTGRFCQ). Intrachain disulfides connect Cys110–Cys120, Cys114–Cys126, and Cys128–Cys137. The segment at 244 to 270 (GPNAEGPASSQHLLPHPKPQHPRPPTQ) is disordered. The TB 1 domain maps to 274–328 (GRCFQDTLPKQPCGSNPLPGLTKQEDCCGSIGTAWGQSKCHKCPQLQYTGVQKPG). Intrachain disulfides connect Cys276-Cys300, Cys286-Cys313, and Cys301-Cys316. Asn346 is a glycosylation site (N-linked (GlcNAc...) asparagine). The region spanning 352 to 392 (DINECAMPGMCRHGDCLNNPGSYRCVCPPGHSLGPSRTQCI) is the EGF-like 2; calcium-binding domain. 7 disulfides stabilise this stretch: Cys356–Cys367, Cys362–Cys376, Cys378–Cys391, Cys402–Cys425, Cys412–Cys437, Cys426–Cys440, and Cys427–Cys452. One can recognise a TB 2 domain in the interval 400–452 (SLCFRLVSTEHQCQHPLTTRLTRQLCCCSVGKAWGARCQRCPADGTAAFKEIC). The segment at 475–555 (FSLFLHPDGP…PTFHRFLPDL (81 aa)) is disordered. Positions 571–612 (ETDECRLNQNICGHGQCVPGPSDYSCHCNAGYRSHPQHRYCV) constitute an EGF-like 3 domain. 32 disulfide bridges follow: Cys575/Cys587, Cys582/Cys596, Cys598/Cys611, Cys617/Cys629, Cys622/Cys638, Cys661/Cys673, Cys667/Cys682, Cys684/Cys698, Cys745/Cys756, Cys751/Cys765, Cys767/Cys780, Cys786/Cys797, Cys792/Cys806, Cys808/Cys821, Cys827/Cys838, Cys833/Cys847, Cys849/Cys861, Cys867/Cys880, Cys874/Cys889, Cys891/Cys904, Cys916/Cys939, Cys926/Cys951, Cys940/Cys956, Cys941/Cys968, Cys994/Cys1007, Cys1002/Cys1016, Cys1018/Cys1031, Cys1037/Cys1048, Cys1043/Cys1057, Cys1059/Cys1072, Cys1113/Cys1127, and Cys1114/Cys1136. An EGF-like 4; calcium-binding domain is found at 613–656 (DVNECEAEPCGPGKGICMNTGGSYNCHCNRGYRLHVGAGGRSCV). The EGF-like 5; calcium-binding domain maps to 657-699 (DLNECTKPHLCGDGGFCINFPGHYKCNCYPGYRLKASRPPICE). An EGF-like 6; calcium-binding domain is found at 741–781 (DVNECSEGTPCSPGWCENLPGSYRCTCAQGYEPAQDGLSCI). Residues 782-822 (DVDECEAGKVCQDGICTNTPGSFQCQCLSGYHLSRDRSRCE) form the EGF-like 7; calcium-binding domain. In terms of domain architecture, EGF-like 8; calcium-binding spans 823 to 861 (DIDECDFPAACIGGDCINTNGSYRCLCPQGHRLVGGRKC). Asn842 is a glycosylation site (N-linked (GlcNAc...) asparagine). Residues 863-905 (DIDECSQDPGLCLPHGACENLQGSYVCVCDEGFTLTQDQHGCE) enclose the EGF-like 9; calcium-binding domain. A TB 3 domain is found at 914–968 (KECYLNFDDTVFCDSVLATNVTQQECCCSLGAGWGDHCEIYPCPVYSSAEFHSLC). A glycan (N-linked (GlcNAc...) asparagine) is linked at Asn933. Positions 990-1032 (DIDECILFGAEICKEGKCVNTQPGYECYCKQGFYYDGNLLECV) constitute an EGF-like 10; calcium-binding domain. Residues 1033 to 1072 (DVDECLDESNCRNGVCENTRGGYRCACTPPAEYSPAQRQC) form the EGF-like 11; calcium-binding domain. The TB 4 domain occupies 1086-1136 (EVCWGQRGEDGMCMGPLAGPALTFDDCCCRQGRGWGTQCRPCPPRGTGSQC). Over residues 1138-1148 (TSQSESNSFWD) the composition is skewed to polar residues. The segment at 1138–1169 (TSQSESNSFWDTSPLLLGKSPRDEDSSEEDSD) is disordered. The 28-residue stretch at 1204–1231 (DIDECRELNQRGLLCKSERCVNTSGSFR) folds into the EGF-like 12; calcium-binding domain. Cystine bridges form between Cys1208–Cys1223 and Cys1218–Cys1232. The N-linked (GlcNAc...) asparagine glycan is linked to Asn1225.

Belongs to the LTBP family. As to quaternary structure, forms part of the large latent transforming growth factor beta (TGFB1) precursor complex; removal is essential for activation of complex. Interacts with EFEMP2. In terms of processing, contains hydroxylated asparagine residues. Post-translationally, two intrachain disulfide bonds from the TB3 domain are rearranged upon TGFB1 binding, and form interchain bonds with TGFB1 propeptide, anchoring it to the extracellular matrix.

The protein localises to the secreted. It is found in the extracellular space. The protein resides in the extracellular matrix. Key regulator of transforming growth factor beta (TGFB1, TGFB2 and TGFB3) that controls TGF-beta activation by maintaining it in a latent state during storage in extracellular space. Associates specifically via disulfide bonds with the Latency-associated peptide (LAP), which is the regulatory chain of TGF-beta, and regulates integrin-dependent activation of TGF-beta. The protein is Latent-transforming growth factor beta-binding protein 3 (Ltbp3) of Mus musculus (Mouse).